The sequence spans 128 residues: MAYRKLGRTSSQRKAMLRDLTTDLIINESIVTTEARAKEIRKTVEKMITLGKRGDLHARRQAAAFVRNEIASENYDEATEKYTSTTALQKLFSELAPRYAERNGGYTRILKTEPRRGDAAPMAIIELV.

This sequence belongs to the bacterial ribosomal protein bL17 family. Part of the 50S ribosomal subunit. Contacts protein L32.

The chain is Large ribosomal subunit protein bL17 from Streptococcus gordonii (strain Challis / ATCC 35105 / BCRC 15272 / CH1 / DL1 / V288).